The primary structure comprises 321 residues: ATP-dependent 6-phosphofructokinase (321 aa).

Residue glycine 12 participates in ATP binding. ADP-binding positions include 22-26 (RGVVR) and 55-60 (RYSVSD). ATP is bound by residues 73–74 (RF) and 103–106 (GDGS). A Mg(2+)-binding site is contributed by aspartate 104. 127-129 (TID) contributes to the substrate binding site. Aspartate 129 serves as the catalytic Proton acceptor. Arginine 156 contacts ADP. Substrate contacts are provided by residues arginine 164 and 171-173 (MGR). ADP contacts are provided by residues 187–189 (GCE), arginine 213, and 215–217 (KRH). Substrate-binding positions include glutamate 224, arginine 245, and 251-254 (HIQR).

Belongs to the phosphofructokinase type A (PFKA) family. ATP-dependent PFK group I subfamily. Prokaryotic clade 'B1' sub-subfamily. As to quaternary structure, homotetramer. Mg(2+) is required as a cofactor.

Its subcellular location is the cytoplasm. It catalyses the reaction beta-D-fructose 6-phosphate + ATP = beta-D-fructose 1,6-bisphosphate + ADP + H(+). It participates in carbohydrate degradation; glycolysis; D-glyceraldehyde 3-phosphate and glycerone phosphate from D-glucose: step 3/4. With respect to regulation, allosterically activated by ADP and other diphosphonucleosides, and allosterically inhibited by phosphoenolpyruvate. Its function is as follows. Catalyzes the phosphorylation of D-fructose 6-phosphate to fructose 1,6-bisphosphate by ATP, the first committing step of glycolysis. This chain is ATP-dependent 6-phosphofructokinase, found in Haemophilus influenzae (strain PittEE).